The chain runs to 210 residues: MRVITLSGITLFLLASLASAIELTFKLENQEKQCYYLDSFHTGEKTHFTYAVQSGGSFDVDYMIKAPSQKTVALGKKRRQADVFFTLEEKGEYEFCFDNHMSTFTDKIVTMEITMENELSLPALTRDEAKDYKKDSMQSTVLEISTALSEIDRVQNYFKTREHRNYSTVKSTQARIFWFSLAESIMVVALSALQVFIVKTFFKRSGRRGV.

The signal sequence occupies residues 1 to 20; sequence MRVITLSGITLFLLASLASA. The Lumenal segment spans residues 21 to 175; it reads IELTFKLENQ…YSTVKSTQAR (155 aa). Residues 32–115 form the GOLD domain; sequence KQCYYLDSFH…DKIVTMEITM (84 aa). A glycan (N-linked (GlcNAc...) asparagine) is linked at Asn-165. A helical transmembrane segment spans residues 176–196; that stretch reads IFWFSLAESIMVVALSALQVF. At 197 to 210 the chain is on the cytoplasmic side; sequence IVKTFFKRSGRRGV.

The protein belongs to the EMP24/GP25L family.

It is found in the endoplasmic reticulum membrane. This is an uncharacterized protein from Schizosaccharomyces pombe (strain 972 / ATCC 24843) (Fission yeast).